The primary structure comprises 569 residues: Aspartate--tRNA ligase, cytoplasmic 2 (569 aa).

Residues 1–23 (MSEENNHKEKSKNEIKKEKKKIE) form a disordered region. Residues 292-295 (QFYR) are aspartate. Arg-314 provides a ligand contact to L-aspartate. Residues 314–316 (RTD) and 322–324 (RHL) each bind ATP. The L-aspartate site is built by Ser-475 and Arg-479. 540–543 (GLER) serves as a coordination point for ATP.

The protein belongs to the class-II aminoacyl-tRNA synthetase family. Type 2 subfamily.

The protein resides in the cytoplasm. It catalyses the reaction tRNA(Asp) + L-aspartate + ATP = L-aspartyl-tRNA(Asp) + AMP + diphosphate. In Dictyostelium discoideum (Social amoeba), this protein is Aspartate--tRNA ligase, cytoplasmic 2 (aspS2).